A 328-amino-acid polypeptide reads, in one-letter code: Delta-aminolevulinic acid dehydratase (328 aa).

The Schiff-base intermediate with substrate role is filled by Lys-200. The 5-aminolevulinate site is built by Arg-210 and Lys-222. Mg(2+) is bound at residue Glu-238. Catalysis depends on Lys-253, which acts as the Schiff-base intermediate with substrate. 5-aminolevulinate is bound by residues Ser-279 and Tyr-318.

It belongs to the ALAD family. As to quaternary structure, homooctamer.

The enzyme catalyses 2 5-aminolevulinate = porphobilinogen + 2 H2O + H(+). It functions in the pathway porphyrin-containing compound metabolism; protoporphyrin-IX biosynthesis; coproporphyrinogen-III from 5-aminolevulinate: step 1/4. Stimulated by magnesium, inhibited by zinc. In terms of biological role, catalyzes an early step in the biosynthesis of tetrapyrroles. Binds two molecules of 5-aminolevulinate per subunit, each at a distinct site, and catalyzes their condensation to form porphobilinogen. This Chlorobaculum tepidum (strain ATCC 49652 / DSM 12025 / NBRC 103806 / TLS) (Chlorobium tepidum) protein is Delta-aminolevulinic acid dehydratase (hemB).